A 230-amino-acid chain; its full sequence is Probable endonuclease C19F8.04c (230 aa).

A helical transmembrane segment spans residues Ala10–Leu27. The 162-residue stretch at Lys55–Gln216 folds into the TNase-like domain. Residue Arg104 is part of the active site. Asp109 is a Ca(2+) binding site. Residues Glu112 and Arg152 contribute to the active site.

It belongs to the LCL3 family.

Its subcellular location is the mitochondrion. The protein resides in the membrane. This is Probable endonuclease C19F8.04c from Schizosaccharomyces pombe (strain 972 / ATCC 24843) (Fission yeast).